A 208-amino-acid chain; its full sequence is Proheparin-binding EGF-like growth factor (208 aa).

An N-terminal signal peptide occupies residues 1–23 (MKLLPSVVLKLFLAAVFSALVTG). Residues 24–62 (ESLERLRRGLADGTSNLVSPTESTDQLLPPGGGRGREVL) constitute a propeptide that is removed on maturation. Topologically, residues 24-161 (ESLERLRRGL…NRLYTYDHTT (138 aa)) are extracellular. The span at 37–49 (TSNLVSPTESTDQ) shows a compositional bias: polar residues. 2 disordered regions span residues 37–57 (TSNLVSPTESTDQLLPPGGGR) and 81–104 (QALATPSKEERGKRKKKGKGLGKK). O-linked (GalNAc...) threonine glycosylation occurs at T85. Over residues 93 to 102 (KRKKKGKGLG) the composition is skewed to basic residues. An EGF-like domain is found at 104–144 (KRDPCLRKYKDFCIHGECKYVKELRAPSCICHPGYHGERCH). 3 cysteine pairs are disulfide-bonded: C108–C121, C116–C132, and C134–C143. A propeptide spans 149–208 (PVKNRLYTYDHTTILAVVAVVLSSVCLLVIVGLLMFRYHRRGGYDVENEEKVKLGVTASH) (C-terminal). Residues 162 to 182 (ILAVVAVVLSSVCLLVIVGLL) traverse the membrane as a helical segment. The Cytoplasmic segment spans residues 183–208 (MFRYHRRGGYDVENEEKVKLGVTASH).

Interacts with FBLN1. Interacts with EGFR and ERBB4. O-glycosylated. As to expression, macrophages, midbrain, cerebellum, hypothalamus, cerebral cortex, bulbourethral gland, lung, heart ventricle, kidney, skin, prostate, seminal vesicle, testis; at low levels in lymph node, thymus, spleen; not detected in pituitary, olfactory bulb, thyroid, duodenum, pancreas, liver, submaxillary gland.

It localises to the secreted. It is found in the extracellular space. The protein resides in the cell membrane. In terms of biological role, growth factor that mediates its effects via EGFR, ERBB2 and ERBB4. Required for normal cardiac valve formation and normal heart function. Promotes smooth muscle cell proliferation. May be involved in macrophage-mediated cellular proliferation. It is mitogenic for fibroblasts, but not endothelial cells. It is able to bind EGF receptor/EGFR with higher affinity than EGF itself and is a far more potent mitogen for smooth muscle cells than EGF. Also acts as a diphtheria toxin receptor. This Sus scrofa (Pig) protein is Proheparin-binding EGF-like growth factor (HBEGF).